Consider the following 582-residue polypeptide: Choline kinase (582 aa).

Residues Met-1–Ser-36 are disordered. Ser-30 is subject to Phosphoserine; by PKA. 2 positions are modified to phosphoserine: Ser-48 and Ser-51. Position 54 is a phosphothreonine (Thr-54). Ser-85 bears the Phosphoserine; by PKA mark.

This sequence belongs to the choline/ethanolamine kinase family. Monomer. Interacts with NAP1. Mg(2+) serves as cofactor.

It is found in the cytoplasm. The catalysed reaction is choline + ATP = phosphocholine + ADP + H(+). The enzyme catalyses ethanolamine + ATP = phosphoethanolamine + ADP + H(+). Its pathway is phospholipid metabolism; phosphatidylcholine biosynthesis; phosphocholine from choline: step 1/1. Functionally, catalyzes the committed step in the synthesis of phosphatidylcholine by the CDP-choline pathway. Also exhibits ethanolamine kinase activity but it is a poor substrate at 14% efficiency compared with choline. In Saccharomyces cerevisiae (strain ATCC 204508 / S288c) (Baker's yeast), this protein is Choline kinase.